The following is a 614-amino-acid chain: Phosphomethylpyrimidine synthase (614 aa).

Residues N226, M255, Y284, H320, 340–342, 381–384, and E420 contribute to the substrate site; these read SRG and DGLR. H424 lines the Zn(2+) pocket. Y447 is a substrate binding site. H488 contributes to the Zn(2+) binding site. Residues C568, C571, and C576 each coordinate [4Fe-4S] cluster.

Belongs to the ThiC family. As to quaternary structure, homodimer. [4Fe-4S] cluster is required as a cofactor.

The catalysed reaction is 5-amino-1-(5-phospho-beta-D-ribosyl)imidazole + S-adenosyl-L-methionine = 4-amino-2-methyl-5-(phosphooxymethyl)pyrimidine + CO + 5'-deoxyadenosine + formate + L-methionine + 3 H(+). Its pathway is cofactor biosynthesis; thiamine diphosphate biosynthesis. Catalyzes the synthesis of the hydroxymethylpyrimidine phosphate (HMP-P) moiety of thiamine from aminoimidazole ribotide (AIR) in a radical S-adenosyl-L-methionine (SAM)-dependent reaction. The polypeptide is Phosphomethylpyrimidine synthase (Acidovorax ebreus (strain TPSY) (Diaphorobacter sp. (strain TPSY))).